A 793-amino-acid chain; its full sequence is MSYLRASRTSSNLSLAKKPSKTRKKLQARKEWDSSVNDLTVFRATNEELEHRREIHRSKNQWLARWELQNKANYKQSEKENSTQFENSRLALMKEILSDQYLMNDVLERSDRALAVVKDLFGDAPRRHTGFPNVTMAPSCDLETSRAPIVRKKDPPTQLSILSESVMDSQAINEVDKSLSRSEYSDSEAEVSISIQPNMKAERVQQLLTGEGPKSEAFITPHKSEGDPSQTQCALNATTAVNRVKVRRTEEESPKPEESDSIIGRVLNPHGKANKRISLKGKKKRTTNQSQTKDFSTFKASERDLTTSNQSSLGLLNSMIMEVEQDLAEYERQTGREVLSAPPAHGLTGFTLSLVSSLKRVVSYLKESDLLLQREVRERQNLQGELVEQRLMLDALTAEILSLKEGGNIHENHSQTKQCPEVDGDKLTSITQEAKTFPGLNGETCRTSADCGLSKVNQFMDSQDVQDTDEKHSRLGVSKDEFGARLYPQGRPAEEPRLASALPSHVFQQAVLLSPPRQKTVGNLSSHSAVPKRAANRLPSPPADLMTAPVEIEWPESKLFQRSINYKNTAALIERGTMVPGQENSKHVYSSAQGSERVNQHPTESTKEVQGLEIGESQINPLQNEDLVSQMQQLALQNAALKAQLEQIHFSPEGNAPEEAAAEQLHNPEPATDTPARAALVPVSLEMRIAELNRQSAEARNKLLKLIEQQKQSIVVSPTLSPITPQGRRTGSSLDTTPLSSCSTSGRRSSGASNKSESISTSVGSLRSASTGRRSQAANDRGEGWFALSAHIS.

The tract at residues 1–29 (MSYLRASRTSSNLSLAKKPSKTRKKLQAR) is disordered. Over residues 18–27 (KPSKTRKKLQ) the composition is skewed to basic residues. The stretch at 312–405 (SLGLLNSMIM…LTAEILSLKE (94 aa)) forms a coiled coil. Residues 519 to 542 (KTVGNLSSHSAVPKRAANRLPSPP) form a disordered region. A coiled-coil region spans residues 622-712 (LQNEDLVSQM…LLKLIEQQKQ (91 aa)). A compositionally biased stretch (polar residues) spans 718–739 (PTLSPITPQGRRTGSSLDTTPL). The interval 718–783 (PTLSPITPQG…RSQAANDRGE (66 aa)) is disordered. Low complexity predominate over residues 740-753 (SSCSTSGRRSSGAS). The segment covering 754 to 778 (NKSESISTSVGSLRSASTGRRSQAA) has biased composition (polar residues).

The protein localises to the cytoplasm. It localises to the cytoskeleton. The protein resides in the microtubule organizing center. It is found in the centrosome. Its subcellular location is the centriole. The protein localises to the spindle. Its function is as follows. Regulator required for centriole duplication. The polypeptide is Spindle and centriole-associated protein 1 (spice1) (Xenopus laevis (African clawed frog)).